Consider the following 180-residue polypeptide: Putative methyltransferase YrhH (180 aa).

It belongs to the methyltransferase superfamily.

In Bacillus subtilis (strain 168), this protein is Putative methyltransferase YrhH (yrhH).